Reading from the N-terminus, the 432-residue chain is Sensor histidine kinase YrkQ (432 aa).

The Cytoplasmic portion of the chain corresponds to Met1–Leu12. Residues Ala13–Ile33 form a helical membrane-spanning segment. Residues Thr34–Leu145 are Extracellular-facing. A helical transmembrane segment spans residues Ala146–Ile166. The 53-residue stretch at Arg167 to Lys219 folds into the HAMP domain. The Cytoplasmic portion of the chain corresponds to Arg167–Met432. The Histidine kinase domain occupies Glu234 to Met432. His237 is subject to Phosphohistidine; by autocatalysis.

It localises to the cell membrane. It catalyses the reaction ATP + protein L-histidine = ADP + protein N-phospho-L-histidine.. Its function is as follows. Member of the two-component regulatory system YrkQ/YrkP. Probably activates YrkP by phosphorylation. This is Sensor histidine kinase YrkQ (yrkQ) from Bacillus subtilis (strain 168).